Reading from the N-terminus, the 181-residue chain is NADH-quinone oxidoreductase subunit B (181 aa).

Residues C60, C61, C125, and C155 each contribute to the [4Fe-4S] cluster site.

Belongs to the complex I 20 kDa subunit family. In terms of assembly, NDH-1 is composed of 14 different subunits. Subunits NuoB, C, D, E, F, and G constitute the peripheral sector of the complex. [4Fe-4S] cluster serves as cofactor.

It localises to the cell inner membrane. The catalysed reaction is a quinone + NADH + 5 H(+)(in) = a quinol + NAD(+) + 4 H(+)(out). Its function is as follows. NDH-1 shuttles electrons from NADH, via FMN and iron-sulfur (Fe-S) centers, to quinones in the respiratory chain. Couples the redox reaction to proton translocation (for every two electrons transferred, four hydrogen ions are translocated across the cytoplasmic membrane), and thus conserves the redox energy in a proton gradient. This chain is NADH-quinone oxidoreductase subunit B, found in Novosphingobium aromaticivorans (strain ATCC 700278 / DSM 12444 / CCUG 56034 / CIP 105152 / NBRC 16084 / F199).